The primary structure comprises 84 residues: MKGDIIISPLSTEKTALMAEKENKLTLMVRRDANREMIKKEVEERFGVKVEGINVMITKKGKKAIVKLAKEYSAEEIAERIGVF.

It belongs to the universal ribosomal protein uL23 family. As to quaternary structure, part of the 50S ribosomal subunit. Contacts protein L29.

In terms of biological role, binds to 23S rRNA. One of the proteins that surrounds the polypeptide exit tunnel on the outside of the ribosome. The sequence is that of Large ribosomal subunit protein uL23 from Thermoplasma acidophilum (strain ATCC 25905 / DSM 1728 / JCM 9062 / NBRC 15155 / AMRC-C165).